The primary structure comprises 300 residues: Transcription initiation factor IIB 1 (300 aa).

Residues 3–34 form a TFIIB-type zinc finger; sequence GKRVCPVCGSTEFIYDPSRGEIVCKVCGYVIE. 4 residues coordinate Zn(2+): Cys7, Cys10, Cys26, and Cys29. 2 tandem repeats follow at residues 114-197 and 210-291.

This sequence belongs to the TFIIB family.

Its function is as follows. Stabilizes TBP binding to an archaeal box-A promoter. Also responsible for recruiting RNA polymerase II to the pre-initiation complex (DNA-TBP-TFIIB). This chain is Transcription initiation factor IIB 1, found in Thermococcus kodakarensis (strain ATCC BAA-918 / JCM 12380 / KOD1) (Pyrococcus kodakaraensis (strain KOD1)).